Consider the following 218-residue polypeptide: 3,4-dihydroxy-2-butanone 4-phosphate synthase (218 aa).

D-ribulose 5-phosphate-binding positions include 38–39 (RE), Asp43, 151–155 (RRGHT), and Glu175. Glu39 contacts Mg(2+). His154 is a binding site for Mg(2+).

This sequence belongs to the DHBP synthase family. Homodimer. Requires Mg(2+) as cofactor. Mn(2+) serves as cofactor.

It catalyses the reaction D-ribulose 5-phosphate = (2S)-2-hydroxy-3-oxobutyl phosphate + formate + H(+). It participates in cofactor biosynthesis; riboflavin biosynthesis; 2-hydroxy-3-oxobutyl phosphate from D-ribulose 5-phosphate: step 1/1. Functionally, catalyzes the conversion of D-ribulose 5-phosphate to formate and 3,4-dihydroxy-2-butanone 4-phosphate. The protein is 3,4-dihydroxy-2-butanone 4-phosphate synthase of Vibrio atlanticus (strain LGP32) (Vibrio splendidus (strain Mel32)).